A 712-amino-acid chain; its full sequence is Zinc finger and BTB domain-containing protein 39 (712 aa).

The BTB domain maps to 30-96 (CDVTIVVGSR…VYTSELFTDL (67 aa)). Disordered stretches follow at residues 129 to 162 (ARAKPLTSTSESHSGTLSCPSAEPAHPLGELRGG), 176 to 224 (SDAG…IPSM), and 236 to 260 (GIQTSTSSCQPYKVQSNGDFSKNSF). Positions 134–147 (LTSTSESHSGTLSC) are enriched in polar residues. Residue Lys-183 forms a Glycyl lysine isopeptide (Lys-Gly) (interchain with G-Cter in SUMO2) linkage. The C2H2-type 1 zinc finger occupies 372–394 (GNCKVCETHFQDRNSRVTHVLSH). A C2H2-type 2; atypical zinc finger spans residues 400-422 (FSCDMCETKFFTQWQLTLHRRDG). Lys-439 is covalently cross-linked (Glycyl lysine isopeptide (Lys-Gly) (interchain with G-Cter in SUMO2)). The C2H2-type 3; atypical zinc-finger motif lies at 480-502 (QACSVCDQRHLNLCSLMWHTLSH). C2H2-type zinc fingers lie at residues 508 to 530 (FSCSVCANSFVDWHLLEKHMAVH), 538 to 560 (FHCRLCSQSFKSEAAYRYHVSQH), 605 to 627 (YSCKVCGKRFAHTSEFNYHRRIH), and 633 to 655 (YQCKVCHKFFRGRSTIKCHLKTH). The segment at 661–683 (YRCTVCGHYSSTLNLMSKHVGVH) adopts a C2H2-type 8; atypical zinc-finger fold.

The protein belongs to the krueppel C2H2-type zinc-finger protein family.

The protein localises to the nucleus. In terms of biological role, may be involved in transcriptional regulation. The chain is Zinc finger and BTB domain-containing protein 39 (ZBTB39) from Homo sapiens (Human).